A 185-amino-acid chain; its full sequence is Tetratricopeptide repeat protein 36 homolog (185 aa).

3 TPR repeats span residues 53-86 (SREL…AQRA), 88-119 (VLNN…ASDQ), and 125-158 (CHAH…GSKF).

Belongs to the TTC36 family.

The polypeptide is Tetratricopeptide repeat protein 36 homolog (Drosophila pseudoobscura pseudoobscura (Fruit fly)).